The primary structure comprises 337 residues: Neurogenic differentiation factor 6 (337 aa).

Residues 43–82 form a disordered region; it reads LRGKSIKRAPGEETEKEEEEEDREEEDENGLPRRRGLRKK. Acidic residues predominate over residues 54–71; that stretch reads EETEKEEEEEDREEEDEN. Positions 80–86 match the Nuclear localization signal motif; the sequence is RKKKTTK. In terms of domain architecture, bHLH spans 94-146; sequence FRRQEANARERNRMHGLNDALDNLRKVVPCYSKTQKLSKIETLRLAKNYIWAL.

As to quaternary structure, efficient DNA binding requires dimerization with another bHLH protein.

The protein resides in the nucleus. Activates E box-dependent transcription in collaboration with TCF3/E47. May be a trans-acting factor involved in the development and maintenance of the mammalian nervous system. Transactivates the promoter of its own gene. The protein is Neurogenic differentiation factor 6 (NEUROD6) of Homo sapiens (Human).